A 470-amino-acid chain; its full sequence is Solute carrier family 7 member 13 (470 aa).

Residues 1-11 lie on the Cytoplasmic side of the membrane; the sequence is MDRGEKIQLKR. The helical transmembrane segment at 12-32 threads the bilayer; that stretch reads VFGYWWGTSFLLINIIGAGIF. The Extracellular segment spans residues 33–45; the sequence is VSPKGVLAYSCMN. The chain crosses the membrane as a helical span at residues 46–66; that stretch reads VGVSLCVWAGCAILAMTSTLC. Topologically, residues 67-87 are cytoplasmic; it reads SAEISISFPCSGAQYYFLKRY. The helical transmembrane segment at 88–108 threads the bilayer; that stretch reads FGSTVAFLNLWTSLFLGSGVV. Topologically, residues 109 to 128 are extracellular; sequence AGQALLLAEYSIQPFFPSCS. A helical transmembrane segment spans residues 129-149; sequence VPKLPKKCLALAMLWIVGILT. The Cytoplasmic portion of the chain corresponds to 150-162; sequence SRGVKEVTWLQIA. The helical transmembrane segment at 163–183 threads the bilayer; the sequence is SSVLKVSILSFISLTGVVFLI. At 184-206 the chain is on the extracellular side; it reads RGKKENVERFQNAFDAELPDISH. A helical transmembrane segment spans residues 207–227; the sequence is LIQAIFQGYFAYSGGACFTLI. At 228 to 240 the chain is on the cytoplasmic side; that stretch reads AGELKKPRTTIPK. Residues 241-261 traverse the membrane as a helical segment; the sequence is CIFTALPLVTVVYLLVNISYL. Topologically, residues 262–287 are extracellular; that stretch reads TVLTPREILSSDAVAITWADRAFPSL. A helical transmembrane segment spans residues 288–308; the sequence is AWIMPFAISTSLFSNLLISIF. The Cytoplasmic segment spans residues 309 to 336; it reads KSSRPIYLASQEGQLPLLFNTLNSHSSP. The chain crosses the membrane as a helical span at residues 337-357; the sequence is FTAVLLLVTLGSLAIILTSLI. A topological domain (extracellular) is located at residue D358. Residues 359-379 traverse the membrane as a helical segment; that stretch reads LINYIFFTGSLWSILLMIGIL. The Cytoplasmic segment spans residues 380 to 393; sequence RRRYQEPNLSIPYK. Residues 394-414 form a helical membrane-spanning segment; the sequence is VFLSFPLATIVIDVGLVVIPL. The Extracellular segment spans residues 415–421; the sequence is VKSPNVH. Residues 422 to 442 form a helical membrane-spanning segment; that stretch reads YVYVLLLVLSGLLFYIPLIHF. Residues 443–470 are Cytoplasmic-facing; that stretch reads KIRLAWFEKMTCYLQLLFNICLPDVSEE.

This sequence belongs to the amino acid-polyamine-organocation (APC) superfamily. Disulfide-linked heterodimer composed of the catalytic light subunit SLC7A13 and the heavy subunit SLC3A1. In terms of tissue distribution, expressed in the kidney.

The protein resides in the apical cell membrane. The enzyme catalyses L-cystine(out) + L-aspartate(in) = L-cystine(in) + L-aspartate(out). It carries out the reaction L-cystine(out) = L-cystine(in). The catalysed reaction is L-aspartate(in) + L-glutamate(out) = L-aspartate(out) + L-glutamate(in). It catalyses the reaction L-aspartate(in) + L-glutamine(out) = L-aspartate(out) + L-glutamine(in). The enzyme catalyses L-aspartate(in) + L-methionine(out) = L-aspartate(out) + L-methionine(in). It carries out the reaction L-leucine(out) + L-aspartate(in) = L-leucine(in) + L-aspartate(out). The catalysed reaction is L-valine(out) + L-aspartate(in) = L-valine(in) + L-aspartate(out). It catalyses the reaction L-aspartate(in) + L-phenylalanine(out) = L-aspartate(out) + L-phenylalanine(in). The enzyme catalyses L-tyrosine(out) + L-aspartate(in) = L-tyrosine(in) + L-aspartate(out). It carries out the reaction L-tryptophan(out) + L-aspartate(in) = L-tryptophan(in) + L-aspartate(out). Its function is as follows. Associates with SLC3A1/rBAT to form a functional heterodimeric complex that transports anionic and neutral amino acids across the apical plasma membrane of renal epithelium. Preferentially mediates exchange transport, but can also operate via facilitated diffusion. May act as a major transporter for L-cystine in late proximal tubules, ensuring its reabsorption from the luminal fluid in exchange for cytosolic L-glutamate or L-aspartate. The sequence is that of Solute carrier family 7 member 13 (SLC7A13) from Homo sapiens (Human).